Consider the following 383-residue polypeptide: uncharacterized protein (383 aa).

This sequence belongs to the peptidase M20 family.

This is an uncharacterized protein from Staphylococcus aureus (strain USA300).